Consider the following 287-residue polypeptide: MNLQYLILSLLSTTVYGGFNLNFDSKGDALEKAAIDFTGEDVAVIKENERESFGITDGPLKDACGKVSGRRPDHVWLYKPTLWGDMYTMYKWPEVTRTLTPIAARVVGKEQKPMIVSSQVYRNRSNRTVKVNGKISQEVTNTVENKWSKTHGLSVTASMTYSFKVVEASMEIGYTSEWGQEETKSESVAVGQEMGFESELQPGESVEAVLSATKGSMIIDVTYRATLDGCCAINYNNGWKGHHYYCYPIGMVQDAGKLKKHVDVKETIKIGFYSDSHVIVRDKHGKK.

An N-terminal signal peptide occupies residues 1–17 (MNLQYLILSLLSTTVYG). Position 284 is a histidine amide (His284).

It belongs to the megalysin family. Post-translationally, contains 2 disulfide bonds. Expressed by the venom apparatus.

The protein resides in the secreted. The protein localises to the target cell membrane. In terms of biological role, may function as a large pore-forming protein. This is U-megalopygitoxin(8)-Mo12 from Megalopyge opercularis (Southern flannel moth).